The following is a 320-amino-acid chain: Bifunctional protein FolD 2 (320 aa).

NADP(+) contacts are provided by residues 173-175 and isoleucine 242; that span reads GRS.

It belongs to the tetrahydrofolate dehydrogenase/cyclohydrolase family. In terms of assembly, homodimer.

It catalyses the reaction (6R)-5,10-methylene-5,6,7,8-tetrahydrofolate + NADP(+) = (6R)-5,10-methenyltetrahydrofolate + NADPH. The catalysed reaction is (6R)-5,10-methenyltetrahydrofolate + H2O = (6R)-10-formyltetrahydrofolate + H(+). It functions in the pathway one-carbon metabolism; tetrahydrofolate interconversion. In terms of biological role, catalyzes the oxidation of 5,10-methylenetetrahydrofolate to 5,10-methenyltetrahydrofolate and then the hydrolysis of 5,10-methenyltetrahydrofolate to 10-formyltetrahydrofolate. The polypeptide is Bifunctional protein FolD 2 (Rubrobacter xylanophilus (strain DSM 9941 / JCM 11954 / NBRC 16129 / PRD-1)).